The chain runs to 153 residues: Transcriptional repressor NrdR (153 aa).

A zinc finger lies at 3 to 34; it reads CPSCFHNGTRVLDSRPVDEGRSIRRRRECESC. The ATP-cone domain maps to 49 to 139; that stretch reads LIVVKKEGTR…VYRQFKDLNV (91 aa).

This sequence belongs to the NrdR family. Zn(2+) is required as a cofactor.

In terms of biological role, negatively regulates transcription of bacterial ribonucleotide reductase nrd genes and operons by binding to NrdR-boxes. The protein is Transcriptional repressor NrdR of Bacillus mycoides (strain KBAB4) (Bacillus weihenstephanensis).